A 91-amino-acid polypeptide reads, in one-letter code: Progonadoliberin-1 (91 aa).

The signal sequence occupies residues M1–S23. Q24 is subject to Pyrrolidone carboxylic acid. G33 is modified (glycine amide).

The protein belongs to the GnRH family. In terms of processing, the precursor is cleaved by ACE, which removes the Gly-Lys-Arg peptide at the C-terminus, leading to mature hormone. The mature form of Gonadoliberin-1 is also cleaved and degraded by ACE.

It localises to the secreted. Its function is as follows. Stimulates the secretion of gonadotropins; it stimulates the secretion of both luteinizing and follicle-stimulating hormones. The polypeptide is Progonadoliberin-1 (GNRH1) (Sus scrofa (Pig)).